The primary structure comprises 343 residues: Nuclear hormone receptor family member nhr-167 (343 aa).

A DNA-binding region (nuclear receptor) is located at residues His-5–Leu-81. NR C4-type zinc fingers lie at residues Cys-8–Cys-28 and Cys-45–Cys-64. Positions Thr-101–Ala-339 constitute an NR LBD domain.

It belongs to the nuclear hormone receptor family.

The protein resides in the nucleus. In terms of biological role, orphan nuclear receptor. In Caenorhabditis elegans, this protein is Nuclear hormone receptor family member nhr-167 (nhr-167).